Here is a 265-residue protein sequence, read N- to C-terminus: Glutamate racemase (265 aa).

Residues 12 to 13 (DS) and 44 to 45 (YG) each bind substrate. Cys-75 acts as the Proton donor/acceptor in catalysis. Residue 76-77 (NT) participates in substrate binding. Cys-186 (proton donor/acceptor) is an active-site residue. 187–188 (TH) contacts substrate.

It belongs to the aspartate/glutamate racemases family.

It catalyses the reaction L-glutamate = D-glutamate. The protein operates within cell wall biogenesis; peptidoglycan biosynthesis. Functionally, provides the (R)-glutamate required for cell wall biosynthesis. This is Glutamate racemase from Pseudomonas aeruginosa (strain UCBPP-PA14).